A 241-amino-acid polypeptide reads, in one-letter code: Ubiquinone biosynthesis O-methyltransferase (241 aa).

Residues Arg44, Gly64, Asp85, and Met129 each coordinate S-adenosyl-L-methionine.

It belongs to the methyltransferase superfamily. UbiG/COQ3 family.

It catalyses the reaction a 3-demethylubiquinol + S-adenosyl-L-methionine = a ubiquinol + S-adenosyl-L-homocysteine + H(+). The catalysed reaction is a 3-(all-trans-polyprenyl)benzene-1,2-diol + S-adenosyl-L-methionine = a 2-methoxy-6-(all-trans-polyprenyl)phenol + S-adenosyl-L-homocysteine + H(+). It participates in cofactor biosynthesis; ubiquinone biosynthesis. Its function is as follows. O-methyltransferase that catalyzes the 2 O-methylation steps in the ubiquinone biosynthetic pathway. The sequence is that of Ubiquinone biosynthesis O-methyltransferase from Serratia proteamaculans (strain 568).